The following is a 68-amino-acid chain: Protein transport protein Sec61 subunit gamma (68 aa).

The Cytoplasmic segment spans residues 1–32 (MDQVMQFVEPSRQFVKDSIRLVKRCTKPDRKE). The chain crosses the membrane as a helical span at residues 33 to 61 (FQKVAMATAIGFAIMGFIGFFVKLIHIPI). Over 62–68 (NNIIVGG) the chain is Extracellular.

It belongs to the SecE/SEC61-gamma family. The SEC61 channel-forming translocon complex consists of channel-forming core components SEC61A1, SEC61B and SEC61G and different auxiliary components such as SEC62 and SEC63. The SEC61 channel associates with the multi-pass translocon (MPT) complex.

It is found in the endoplasmic reticulum membrane. Its function is as follows. Component of SEC61 channel-forming translocon complex that mediates transport of signal peptide-containing precursor polypeptides across the endoplasmic reticulum (ER). Forms a ribosome receptor and a gated pore in the ER membrane, both functions required for cotranslational translocation of nascent polypeptides. The SEC61 channel is also involved in ER membrane insertion of transmembrane proteins: it mediates membrane insertion of the first few transmembrane segments of proteins, while insertion of subsequent transmembrane regions of multi-pass membrane proteins is mediated by the multi-pass translocon (MPT) complex. This Harpagifer antarcticus (Antarctic spiny plunderfish) protein is Protein transport protein Sec61 subunit gamma (sec61g).